The following is a 134-amino-acid chain: Small ribosomal subunit protein uS11 (134 aa).

It belongs to the universal ribosomal protein uS11 family. Part of the 30S ribosomal subunit. Interacts with proteins S7 and S18. Binds to IF-3.

Functionally, located on the platform of the 30S subunit, it bridges several disparate RNA helices of the 16S rRNA. Forms part of the Shine-Dalgarno cleft in the 70S ribosome. The polypeptide is Small ribosomal subunit protein uS11 (Polaromonas naphthalenivorans (strain CJ2)).